We begin with the raw amino-acid sequence, 283 residues long: Shikimate dehydrogenase (NADP(+)) (283 aa).

Shikimate is bound by residues 22-24 (SRS) and threonine 69. The active-site Proton acceptor is lysine 73. Residues asparagine 93 and aspartate 108 each coordinate shikimate. NADP(+) is bound by residues 133-137 (GAGGS) and leucine 222. Tyrosine 224 contributes to the shikimate binding site. Glycine 245 serves as a coordination point for NADP(+).

Belongs to the shikimate dehydrogenase family. Homodimer.

It carries out the reaction shikimate + NADP(+) = 3-dehydroshikimate + NADPH + H(+). It participates in metabolic intermediate biosynthesis; chorismate biosynthesis; chorismate from D-erythrose 4-phosphate and phosphoenolpyruvate: step 4/7. Involved in the biosynthesis of the chorismate, which leads to the biosynthesis of aromatic amino acids. Catalyzes the reversible NADPH linked reduction of 3-dehydroshikimate (DHSA) to yield shikimate (SA). The sequence is that of Shikimate dehydrogenase (NADP(+)) from Rhodopseudomonas palustris (strain BisB5).